The following is a 137-amino-acid chain: Histone H2B.1, sperm (137 aa).

A disordered region spans residues Met1–Arg43. Short sequence motifs (SPKK motif) lie at residues Ser6–Lys9, Ser11–Lys14, and Ser16–Lys19. Basic residues predominate over residues Pro7–Arg43. Phosphoserine occurs at positions 11 and 16. An O-linked (GlcNAc) serine glycan is attached at Ser124. A Glycyl lysine isopeptide (Lys-Gly) (interchain with G-Cter in ubiquitin) cross-link involves residue Lys132.

This sequence belongs to the histone H2B family. In terms of assembly, the nucleosome is a histone octamer containing two molecules each of H2A, H2B, H3 and H4 assembled in one H3-H4 heterotetramer and two H2A-H2B heterodimers. The octamer wraps approximately 147 bp of DNA. Monoubiquitination of Lys-132 gives a specific tag for epigenetic transcriptional activation and is also prerequisite for histone H3 'Lys-4' and 'Lys-79' methylation. Post-translationally, phosphorylated on SPKK motifs 2 and 3; which may regulate DNA binding. Dephosphorylated during maturation of spermatids to mature sperm and rephosphorylated at fertilization. In terms of processing, glcNAcylation at Ser-124 promotes monoubiquitination of Lys-132. It fluctuates in response to extracellular glucose, and associates with transcribed genes.

The protein resides in the nucleus. The protein localises to the chromosome. In terms of biological role, core component of nucleosome. Nucleosomes wrap and compact DNA into chromatin, limiting DNA accessibility to the cellular machineries which require DNA as a template. Histones thereby play a central role in transcription regulation, DNA repair, DNA replication and chromosomal stability. DNA accessibility is regulated via a complex set of post-translational modifications of histones, also called histone code, and nucleosome remodeling. The sequence is that of Histone H2B.1, sperm from Psammechinus miliaris (Green sea urchin).